A 303-amino-acid polypeptide reads, in one-letter code: N-acetyl-D-glucosamine kinase (303 aa).

ATP is bound by residues 4 to 11 and 133 to 140; these read GFDIGGTK and GVGGGLVL. 4 residues coordinate Zn(2+): histidine 157, cysteine 177, cysteine 179, and cysteine 184.

This sequence belongs to the ROK (NagC/XylR) family. NagK subfamily.

It catalyses the reaction N-acetyl-D-glucosamine + ATP = N-acetyl-D-glucosamine 6-phosphate + ADP + H(+). It functions in the pathway cell wall biogenesis; peptidoglycan recycling. In terms of biological role, catalyzes the phosphorylation of N-acetyl-D-glucosamine (GlcNAc) derived from cell-wall degradation, yielding GlcNAc-6-P. In Salmonella agona (strain SL483), this protein is N-acetyl-D-glucosamine kinase.